Consider the following 390-residue polypeptide: ATP phosphoribosyltransferase regulatory subunit (390 aa).

It belongs to the class-II aminoacyl-tRNA synthetase family. HisZ subfamily. In terms of assembly, heteromultimer composed of HisG and HisZ subunits.

It localises to the cytoplasm. The protein operates within amino-acid biosynthesis; L-histidine biosynthesis; L-histidine from 5-phospho-alpha-D-ribose 1-diphosphate: step 1/9. Functionally, required for the first step of histidine biosynthesis. May allow the feedback regulation of ATP phosphoribosyltransferase activity by histidine. The protein is ATP phosphoribosyltransferase regulatory subunit of Bacillus velezensis (strain DSM 23117 / BGSC 10A6 / LMG 26770 / FZB42) (Bacillus amyloliquefaciens subsp. plantarum).